A 262-amino-acid polypeptide reads, in one-letter code: Adenosylcobinamide-GDP ribazoletransferase (262 aa).

A run of 5 helical transmembrane segments spans residues 41 to 63, 68 to 85, 115 to 134, 141 to 163, and 201 to 221; these read AFPF…LMAL, LFAA…TGAL, IGTY…VSAF, FSPL…AMVW, and LLFY…VAFL.

The protein belongs to the CobS family. As to quaternary structure, associated with a large complex of proteins. It depends on Mg(2+) as a cofactor.

Its subcellular location is the cell inner membrane. It catalyses the reaction alpha-ribazole + adenosylcob(III)inamide-GDP = adenosylcob(III)alamin + GMP + H(+). The enzyme catalyses alpha-ribazole 5'-phosphate + adenosylcob(III)inamide-GDP = adenosylcob(III)alamin 5'-phosphate + GMP + H(+). It functions in the pathway cofactor biosynthesis; adenosylcobalamin biosynthesis; adenosylcobalamin from cob(II)yrinate a,c-diamide: step 7/7. Functionally, joins adenosylcobinamide-GDP and alpha-ribazole to generate adenosylcobalamin (Ado-cobalamin). Also synthesizes adenosylcobalamin 5'-phosphate from adenosylcobinamide-GDP and alpha-ribazole 5'-phosphate. The protein is Adenosylcobinamide-GDP ribazoletransferase (cobV) of Sinorhizobium sp.